Consider the following 379-residue polypeptide: MSELSFDAPVWHHGKALRKGYTTGSCATAAAKVAALMVLRQHLIHQVSIVTPSGVTLCLNVESPHIEGQQAIAAIRKDGGDDVDATHGMLIFARVTLNDSGEITLTGGEGIGTVTRKGVGLPLGSAAINRTPRHTIESAVREAIGPARGADVEIFAPEGEARAQKTYNSRLGILGGISIIGTTGIVTPMSEESWKRSLSLELEIKRASGLTRVILVPGNHGERFVREQMGVDTQAVVTMSNFVGYMIEEAVRLGFCQIVLVGHPGKLIKIAAGIFHTHSHIADARMETLVAHLALLGAPLELLTLVSDCDTTEAAMEHIEAYGFGHIYNHLARRICLRVMQMLRFTKTPPVCDAILFSFDNHILGSNRPVDEIAKELQC.

The protein belongs to the CbiD family.

It catalyses the reaction Co-precorrin-5B + S-adenosyl-L-methionine = Co-precorrin-6A + S-adenosyl-L-homocysteine. The protein operates within cofactor biosynthesis; adenosylcobalamin biosynthesis; cob(II)yrinate a,c-diamide from sirohydrochlorin (anaerobic route): step 6/10. Functionally, catalyzes the methylation of C-1 in cobalt-precorrin-5B to form cobalt-precorrin-6A. This is Cobalt-precorrin-5B C(1)-methyltransferase from Salmonella schwarzengrund (strain CVM19633).